A 428-amino-acid chain; its full sequence is Histidine--tRNA ligase (428 aa).

It belongs to the class-II aminoacyl-tRNA synthetase family. In terms of assembly, homodimer.

Its subcellular location is the cytoplasm. The enzyme catalyses tRNA(His) + L-histidine + ATP = L-histidyl-tRNA(His) + AMP + diphosphate + H(+). The polypeptide is Histidine--tRNA ligase (Bordetella bronchiseptica (strain ATCC BAA-588 / NCTC 13252 / RB50) (Alcaligenes bronchisepticus)).